The following is a 993-amino-acid chain: Signal peptide, CUB and EGF-like domain-containing protein 3 (993 aa).

The first 20 residues, 1–20, serve as a signal peptide directing secretion; sequence MGSGRVPGLCLLLLLVHARA. The region spanning 29-69 is the EGF-like 1; calcium-binding domain; that stretch reads DVDECVEGTDNCHIDAICQNTPRSYKCICKSGYTGDGKHCK. 26 disulfides stabilise this stretch: cysteine 33–cysteine 46, cysteine 40–cysteine 55, cysteine 57–cysteine 68, cysteine 74–cysteine 86, cysteine 82–cysteine 95, cysteine 97–cysteine 110, cysteine 116–cysteine 127, cysteine 123–cysteine 136, cysteine 161–cysteine 172, cysteine 168–cysteine 182, cysteine 184–cysteine 197, cysteine 201–cysteine 212, cysteine 208–cysteine 221, cysteine 223–cysteine 236, cysteine 240–cysteine 251, cysteine 247–cysteine 260, cysteine 262–cysteine 275, cysteine 281–cysteine 292, cysteine 288–cysteine 301, cysteine 303–cysteine 316, cysteine 322–cysteine 332, cysteine 328–cysteine 341, cysteine 343–cysteine 355, cysteine 361–cysteine 372, cysteine 368–cysteine 381, and cysteine 383–cysteine 397. One can recognise an EGF-like 2; calcium-binding domain in the interval 70 to 111; it reads DVDECEREDNAGCVHDCVNIPGNYRCTCYDGFHLAHDGHNCL. Residues 112–148 form the EGF-like 3; calcium-binding domain; the sequence is DVDECAEGNGGCQQSCVNMMGSYECHCRDGFFLSDNQ. 3 EGF-like domains span residues 157 to 198, 199 to 237, and 238 to 276; these read EGMN…RDCK, LTCN…KTCI, and ETCA…KTCK. Positions 277–317 constitute an EGF-like 7; calcium-binding domain; it reads DIDECRLNNGGCDHICRNTVGSFECSCKKGYKLLINERSCQ. The region spanning 318 to 356 is the EGF-like 8; calcium-binding domain; that stretch reads DIDECSFDRTCDHMCVNTPGSFQCLCHRGYLLYGVTHCG. The region spanning 357–398 is the EGF-like 9; calcium-binding domain; that stretch reads DVDECSINKGGCRFGCINTPGSYQCTCPAGQGRLHWNGKDCT. Residues asparagine 417, asparagine 464, asparagine 685, asparagine 756, and asparagine 785 are each glycosylated (N-linked (GlcNAc...) asparagine). Cystine bridges form between cysteine 804/cysteine 830 and cysteine 857/cysteine 878. Residues 804–916 form the CUB domain; it reads CGGELGEFTG…RGFQIPYVTY (113 aa).

In terms of assembly, forms homooligomers. Forms heterooligomers with SCUBE1 and SCUBE2. Interacts with TGFBR2 through the CUB domain; this interaction does not affect TGFB1-binding to TGFBR2. Interacts with BMP2, BMP4 and BMP7; the interaction is mediated by the CUB domain. Interacts with BMPR1A, BMPR1B and BMPR2; the interaction with BMPR1A and BMPR1B is BMP2- and BMP4-dependent. Post-translationally, N-glycosylated. Proteolytic cleavage produces a CUB-containing C-terminal fragment that retains the ability to bind to TGFBR2. This reaction is catalyzed in vitro by MMP2 and, to a lesser extent, by MMP9. As to expression, highly expressed in femur and humerus with little or no expression in non-bone tissues.

It localises to the secreted. The protein localises to the cell surface. Is a positive regulator of the BMP signaling pathway, required for proper chondrogenesis, osteogenesis and skeletal development. It acts as a coreceptor for BMP ligands, particularly BMP2 and BMP4, facilitating their interactions with BMP type I receptors. It is required for ligand-induced recruitment of BMP receptors to lipid rafts. Binds to TGFBR2 and activates TGFB signaling. This is Signal peptide, CUB and EGF-like domain-containing protein 3 from Mus musculus (Mouse).